The chain runs to 154 residues: Egg-lysin (154 aa).

An N-terminal signal peptide occupies residues 1–18; the sequence is MKLLVLCIFAMMATLAMS.

Monomer. Homodimer. Molecules associate into dimers and then rapidly dissociate again. Interacts (as a monomer) with the egg vitelline layer protein VERL (via VERL repeats); each VERL chain can bind multiple copies of lysin. As to expression, sperm (at protein level).

The protein resides in the cytoplasmic vesicle. It is found in the secretory vesicle. The protein localises to the acrosome lumen. Functionally, creates a 3 um hole in the egg vitelline layer through which the sperm passes. Does not have enzyme activity. Species-specific interaction between the sperm protein lysin and the egg protein VERL exposes a basic surface on lysin that may dissociate the egg vitelline layer via electrostatic repulsion. Plays a role in ensuring species-specific fertilization. The sequence is that of Egg-lysin from Haliotis rufescens (California red abalone).